Reading from the N-terminus, the 388-residue chain is 1-deoxy-D-xylulose 5-phosphate reductoisomerase (388 aa).

Positions 10, 11, 12, 13, 37, and 121 each coordinate NADPH. Residue lysine 122 coordinates 1-deoxy-D-xylulose 5-phosphate. Residue glutamate 123 participates in NADPH binding. Residue aspartate 147 coordinates Mn(2+). 1-deoxy-D-xylulose 5-phosphate is bound by residues serine 148, glutamate 149, serine 173, and histidine 196. Glutamate 149 is a binding site for Mn(2+). Residue glycine 202 participates in NADPH binding. 1-deoxy-D-xylulose 5-phosphate-binding residues include serine 209, asparagine 214, lysine 215, and glutamate 218. A Mn(2+)-binding site is contributed by glutamate 218.

This sequence belongs to the DXR family. It depends on Mg(2+) as a cofactor. Mn(2+) is required as a cofactor.

The enzyme catalyses 2-C-methyl-D-erythritol 4-phosphate + NADP(+) = 1-deoxy-D-xylulose 5-phosphate + NADPH + H(+). Its pathway is isoprenoid biosynthesis; isopentenyl diphosphate biosynthesis via DXP pathway; isopentenyl diphosphate from 1-deoxy-D-xylulose 5-phosphate: step 1/6. Its function is as follows. Catalyzes the NADPH-dependent rearrangement and reduction of 1-deoxy-D-xylulose-5-phosphate (DXP) to 2-C-methyl-D-erythritol 4-phosphate (MEP). In Lachnoclostridium phytofermentans (strain ATCC 700394 / DSM 18823 / ISDg) (Clostridium phytofermentans), this protein is 1-deoxy-D-xylulose 5-phosphate reductoisomerase.